Here is a 1180-residue protein sequence, read N- to C-terminus: Neurexin like receptor 1 (1180 aa).

The first 20 residues, 1-20 (MSGLCLVLLLSIFAVSQSSG), serve as a signal peptide directing secretion. At 21–1108 (ECSDVSFSSV…SQNKQDLVSK (1088 aa)) the chain is on the extracellular side. The region spanning 124–290 (PITAFDDSSY…LSPNEVHNQC (167 aa)) is the Laminin G-like 1 domain. N-linked (GlcNAc...) asparagine glycosylation occurs at asparagine 229. The cysteines at positions 267 and 290 are disulfide-linked. Residues asparagine 302, asparagine 336, asparagine 355, and asparagine 436 are each glycosylated (N-linked (GlcNAc...) asparagine). The EGF-like 1 domain occupies 444–481 (FQEKCLPNPCENGGGCVQSALDDYVCNCKEGYKGKNCH). 3 cysteine pairs are disulfide-bonded: cysteine 448/cysteine 459, cysteine 453/cysteine 469, and cysteine 471/cysteine 480. 2 N-linked (GlcNAc...) asparagine glycosylation sites follow: asparagine 522 and asparagine 636. Positions 695 to 863 (TFDPVTFSNR…GVAIGDDGYC (169 aa)) constitute a Laminin G-like 2 domain. The EGF-like 2 domain occupies 859–896 (DDGYCRPDLCQNGGQCVDKYDGYVCDCSMTPFGGSDCT). 3 disulfide bridges follow: cysteine 863–cysteine 874, cysteine 868–cysteine 883, and cysteine 885–cysteine 895. N-linked (GlcNAc...) asparagine glycosylation is found at asparagine 933, asparagine 949, asparagine 978, asparagine 997, asparagine 1011, and asparagine 1052. A helical membrane pass occupies residues 1109-1129 (AIIGGGILALSLFILCMSSLI). Residues 1130–1180 (CYMRSRPEGVYKTNETGENCSPSRSEEPLVHNTTSNNNNNPTYASNKEYFC) lie on the Cytoplasmic side of the membrane. Residues 1142-1152 (TNETGENCSPS) show a composition bias toward polar residues. Positions 1142–1180 (TNETGENCSPSRSEEPLVHNTTSNNNNNPTYASNKEYFC) are disordered. Positions 1161-1171 (NTTSNNNNNPT) are enriched in low complexity.

The protein belongs to the neurexin family. As to quaternary structure, interacts (via the intracellular domain) with F-actin; the interaction is required for anchoring F-actin at the membrane for gap junction formation. In terms of tissue distribution, highly expressed in pharyngeal g1 and g2 gland cells, pharyngeal muscle cells and the unilateral GABAergic RIS interneuron (at protein level). Expressed in pm5 pharyngeal muscle cells and the nerve ring.

The protein localises to the cell membrane. It is found in the cell junction. The protein resides in the gap junction. Required for gap junction formation, playing a role in anchoring the cytoskeletal component F-actin to the membrane of adjacent cells and thus facilitating the formation of gap junction channels in embryonic cells, muscle cells and neuronal cells. Plays a role in maintaining gap junction activity to promote pharyngeal muscle contraction. This chain is Neurexin like receptor 1, found in Caenorhabditis elegans.